We begin with the raw amino-acid sequence, 143 residues long: Nuclear transcription factor Y subunit B-4 (143 aa).

The tract at residues 1–23 (MSEGFDGTENGGGGGGGGVGKEQ) is disordered. Gly residues predominate over residues 9 to 20 (ENGGGGGGGGVG). Residues 27–33 (LPIANIG) mediate DNA binding. Positions 54–65 (VQECVSEFISFI) are subunit association domain (SAD). Positions 117 to 130 (KGSRASELPVKKDV) are enriched in basic and acidic residues. The interval 117–143 (KGSRASELPVKKDVVLNGDPGSSFEGM) is disordered.

The protein belongs to the NFYB/HAP3 subunit family. Heterotrimeric transcription factor composed of three components, NF-YA, NF-YB and NF-YC. NF-YB and NF-YC must interact and dimerize for NF-YA association and DNA binding. In terms of tissue distribution, ubiquitous.

Its subcellular location is the nucleus. In terms of biological role, component of the NF-Y/HAP transcription factor complex. The NF-Y complex stimulates the transcription of various genes by recognizing and binding to a CCAAT motif in promoters. May regulate the expression of photosynthetic genes, and may be involved in chloroplast and amyloplast development. The protein is Nuclear transcription factor Y subunit B-4 (NFYB4) of Oryza sativa subsp. japonica (Rice).